The chain runs to 434 residues: CinA-like protein (434 aa).

Belongs to the CinA family.

The protein is CinA-like protein of Mycolicibacterium paratuberculosis (strain ATCC BAA-968 / K-10) (Mycobacterium paratuberculosis).